The following is a 547-amino-acid chain: Immunoglobulin epsilon heavy chain (547 aa).

Gln1 is modified (pyrrolidone carboxylic acid). 5 consecutive Ig-like domains span residues 1–120 (QVQL…TEVT), 130–223 (PSVF…KTFS), 232–329 (PTVK…KKCA), 333–437 (PRGV…TKTS), and 443–542 (PEVY…RAVS). The tract at residues 1 to 124 (QVQLVQSGAE…EGTEVTYTVS (124 aa)) is variable (V) domain, involved in antigen recognition. Intrachain disulfides connect Cys22-Cys96, Cys139-Cys225, Cys153-Cys207, Cys254-Cys312, Cys358-Cys418, and Cys464-Cys524. The segment at 125-547 (GAWTLPSVFP…QRAVSVNPGK (423 aa)) is constant (C) domain. N-linked (GlcNAc...) asparagine glycans are attached at residues Asn145, Asn173, Asn219, Asn265, Asn371, Asn383, and Asn394.

As to quaternary structure, immunoglobulins are composed of two identical heavy chains and two identical light chains; disulfide-linked.

It is found in the secreted. The protein resides in the cell membrane. In terms of biological role, immunoglobulins, also known as antibodies, are membrane-bound or secreted glycoproteins produced by B lymphocytes. In the recognition phase of humoral immunity, the membrane-bound immunoglobulins serve as receptors which, upon binding of a specific antigen, trigger the clonal expansion and differentiation of B lymphocytes into immunoglobulins-secreting plasma cells. Secreted immunoglobulins mediate the effector phase of humoral immunity, which results in the elimination of bound antigens. The antigen binding site is formed by the variable domain of one heavy chain, together with that of its associated light chain. Thus, each immunoglobulin has two antigen binding sites with remarkable affinity for a particular antigen. The variable domains are assembled by a process called V-(D)-J rearrangement and can then be subjected to somatic hypermutations which, after exposure to antigen and selection, allow affinity maturation for a particular antigen. This is Immunoglobulin epsilon heavy chain from Homo sapiens (Human).